The primary structure comprises 134 residues: ATP synthase epsilon chain (134 aa).

This sequence belongs to the ATPase epsilon chain family. In terms of assembly, F-type ATPases have 2 components, CF(1) - the catalytic core - and CF(0) - the membrane proton channel. CF(1) has five subunits: alpha(3), beta(3), gamma(1), delta(1), epsilon(1). CF(0) has three main subunits: a, b and c.

The protein resides in the cell inner membrane. Produces ATP from ADP in the presence of a proton gradient across the membrane. This Nitratidesulfovibrio vulgaris (strain DSM 19637 / Miyazaki F) (Desulfovibrio vulgaris) protein is ATP synthase epsilon chain.